The chain runs to 148 residues: Respiratory supercomplex factor 1, mitochondrial (148 aa).

An HIG1 domain is found at L9–E100. A run of 2 helical transmembrane segments spans residues P36–Y53 and I72–Y89. Residues Y89 to G148 are a coiled coil.

Belongs to the RCF1 family. As to quaternary structure, associates with the respiratory chain complex III/complex IV supercomplex.

The protein resides in the mitochondrion membrane. Cytochrome c oxidase subunit which plays a role in assembly of respiratory supercomplexes. This is Respiratory supercomplex factor 1, mitochondrial (RCF1) from Ajellomyces dermatitidis (strain ER-3 / ATCC MYA-2586) (Blastomyces dermatitidis).